A 366-amino-acid chain; its full sequence is Phenylalanine--tRNA ligase alpha subunit (366 aa).

Glutamate 259 provides a ligand contact to Mg(2+).

This sequence belongs to the class-II aminoacyl-tRNA synthetase family. Phe-tRNA synthetase alpha subunit type 1 subfamily. As to quaternary structure, tetramer of two alpha and two beta subunits. The cofactor is Mg(2+).

It localises to the cytoplasm. It carries out the reaction tRNA(Phe) + L-phenylalanine + ATP = L-phenylalanyl-tRNA(Phe) + AMP + diphosphate + H(+). In Novosphingobium aromaticivorans (strain ATCC 700278 / DSM 12444 / CCUG 56034 / CIP 105152 / NBRC 16084 / F199), this protein is Phenylalanine--tRNA ligase alpha subunit.